Here is a 601-residue protein sequence, read N- to C-terminus: MAALTPRKRKQDSLKCDSLLHFTENLFPSPNKKHCFYQNSDKNEENLHCSQQEHFVLSALKTTEINRLPSANQGSPFKSALSTVSFYNQNKWYLNPLERKLIKESRSTCLKTNDEDKSFPIVTEKMQGKPVCSKKNNKKPQKSLTAKYQPKYRHIKPVSRNSRNSKQNRVIYKPIVEKENNCHSAENNSNAPRVLSQKIKPQVTLQGGAAFFVRKKSSLRKSSLENEPSLGRTQKSKSEVIEDSDVETVSEKKTFATRQVPKCLVLEEKLKIGLLSASSKNKEKLIKDSSDDRVSSKEHKVDKNEAFSSEDSLGENKTISPKSTVYPIFSASSVNSKRSLGEEQFSVGSVNFMKQTNIQKNTNTRDTSKKTKDQLIIDAGQKHFGATVCKSCGMIYTASNPEDEMQHVQHHHRFLEGIKYVGWKKERVVAEFWDGKIVLVLPHDPSFAIKKVEDVQELVDNELGFQQVVPKCPNKIKTFLFISDEKRVVGCLIAEPIKQAFRVLSEPIGPESPSSTECPRAWQCSDVPEPAVCGISRIWVFRLKRRKRIARRLVDTLRNCFMFGCFLSTDEIAFSDPTPDGKLFATKYCNTPNFLVYNFNS.

Ser29, Ser75, Ser223, and Ser244 each carry phosphoserine. The interval 222–243 (SSLENEPSLGRTQKSKSEVIED) is disordered. Residues 282 to 305 (KEKLIKDSSDDRVSSKEHKVDKNE) are compositionally biased toward basic and acidic residues. Residues 282-315 (KEKLIKDSSDDRVSSKEHKVDKNEAFSSEDSLGE) are disordered. Residues 306–315 (AFSSEDSLGE) are compositionally biased toward polar residues. Ser312 is subject to Phosphoserine. A CCHH-type zinc finger spans residues 387 to 411 (TVCKSCGMIYTASNPEDEMQHVQHH). The residue at position 512 (Ser512) is a Phosphoserine.

This sequence belongs to the acetyltransferase family. ECO subfamily. In terms of tissue distribution, widely expressed in fetal tissues. In adult, it is expressed in thymus, placenta and small intestine.

It localises to the nucleus. The protein localises to the chromosome. The enzyme catalyses L-lysyl-[protein] + acetyl-CoA = N(6)-acetyl-L-lysyl-[protein] + CoA + H(+). Functionally, acetyltransferase required for the establishment of sister chromatid cohesion. Couples the processes of cohesion and DNA replication to ensure that only sister chromatids become paired together. In contrast to the structural cohesins, the deposition and establishment factors are required only during the S phase. Acetylates the cohesin component SMC3. The protein is N-acetyltransferase ESCO2 of Homo sapiens (Human).